We begin with the raw amino-acid sequence, 68 residues long: Probable tautomerase HP_0924 (68 aa).

Proline 2 acts as the Proton acceptor; via imino nitrogen in catalysis.

The protein belongs to the 4-oxalocrotonate tautomerase family.

The protein is Probable tautomerase HP_0924 of Helicobacter pylori (strain ATCC 700392 / 26695) (Campylobacter pylori).